The chain runs to 957 residues: Nitrite reductase [NAD(P)H] large subunit (957 aa).

Residue 44 to 79 (YDRVHLTEYFAGRSAESLSLVEGDFFTQHGIELRLS) participates in FAD binding. Residue 193–225 (LREKISELGVGVHTSKATTEIVRNEQGLQLNFR) participates in NAD(+) binding. Residues Cys423, Cys425, Cys457, and Cys460 each contribute to the [2Fe-2S] cluster site. Residues Cys639, Cys645, Cys679, and Cys683 each coordinate [4Fe-4S] cluster. Residue Cys683 participates in siroheme binding.

This sequence belongs to the nitrite and sulfite reductase 4Fe-4S domain family. Homodimer which associates with NirD. Siroheme serves as cofactor. Requires [2Fe-2S] cluster as cofactor. [4Fe-4S] cluster is required as a cofactor. It depends on FAD as a cofactor.

It catalyses the reaction NH4(+) + 3 NADP(+) + 2 H2O = nitrite + 3 NADPH + 5 H(+). The enzyme catalyses NH4(+) + 3 NAD(+) + 2 H2O = nitrite + 3 NADH + 5 H(+). It participates in nitrogen metabolism; nitrate reduction (assimilation). This is Nitrite reductase [NAD(P)H] large subunit (nasB) from Klebsiella oxytoca.